Here is a 575-residue protein sequence, read N- to C-terminus: Isocitrate dehydrogenase kinase/phosphatase (575 aa).

Residues 315–321 (APGVKGM) and Lys-336 contribute to the ATP site. Asp-371 is an active-site residue.

Belongs to the AceK family.

It is found in the cytoplasm. It carries out the reaction L-seryl-[isocitrate dehydrogenase] + ATP = O-phospho-L-seryl-[isocitrate dehydrogenase] + ADP + H(+). In terms of biological role, bifunctional enzyme which can phosphorylate or dephosphorylate isocitrate dehydrogenase (IDH) on a specific serine residue. This is a regulatory mechanism which enables bacteria to bypass the Krebs cycle via the glyoxylate shunt in response to the source of carbon. When bacteria are grown on glucose, IDH is fully active and unphosphorylated, but when grown on acetate or ethanol, the activity of IDH declines drastically concomitant with its phosphorylation. In Yersinia pseudotuberculosis serotype O:1b (strain IP 31758), this protein is Isocitrate dehydrogenase kinase/phosphatase.